The chain runs to 262 residues: Dihydroorotate dehydrogenase B (NAD(+)), electron transfer subunit (262 aa).

The FAD-binding FR-type domain occupies 3–104 (KLQEMMTIVS…MGPLGNGFPV (102 aa)). FAD is bound by residues 53–56 (RPIS), 70–72 (LYR), and 79–80 (GT). 4 residues coordinate [2Fe-2S] cluster: Cys226, Cys231, Cys234, and Cys249.

Belongs to the PyrK family. Heterotetramer of 2 PyrK and 2 PyrD type B subunits. [2Fe-2S] cluster serves as cofactor. It depends on FAD as a cofactor.

The protein operates within pyrimidine metabolism; UMP biosynthesis via de novo pathway; orotate from (S)-dihydroorotate (NAD(+) route): step 1/1. Functionally, responsible for channeling the electrons from the oxidation of dihydroorotate from the FMN redox center in the PyrD type B subunit to the ultimate electron acceptor NAD(+). In Lactococcus lactis subsp. lactis (strain IL1403) (Streptococcus lactis), this protein is Dihydroorotate dehydrogenase B (NAD(+)), electron transfer subunit.